Here is a 283-residue protein sequence, read N- to C-terminus: Protein/nucleic acid deglycase HchA (283 aa).

H86, E91, and H123 together coordinate Zn(2+). C185 functions as the Nucleophile in the catalytic mechanism.

It belongs to the peptidase C56 family. HchA subfamily. In terms of assembly, homodimer.

The protein localises to the cytoplasm. It catalyses the reaction N(omega)-(1-hydroxy-2-oxopropyl)-L-arginyl-[protein] + H2O = lactate + L-arginyl-[protein] + H(+). It carries out the reaction N(6)-(1-hydroxy-2-oxopropyl)-L-lysyl-[protein] + H2O = lactate + L-lysyl-[protein] + H(+). The enzyme catalyses S-(1-hydroxy-2-oxopropyl)-L-cysteinyl-[protein] + H2O = lactate + L-cysteinyl-[protein] + H(+). The catalysed reaction is N(omega)-(1-hydroxy-2-oxoethyl)-L-arginyl-[protein] + H2O = L-arginyl-[protein] + glycolate + H(+). It catalyses the reaction N(6)-(1-hydroxy-2-oxoethyl)-L-lysyl-[protein] + H2O = glycolate + L-lysyl-[protein] + H(+). It carries out the reaction S-(1-hydroxy-2-oxoethyl)-L-cysteinyl-[protein] + H2O = glycolate + L-cysteinyl-[protein] + H(+). The enzyme catalyses N(2)-(1-hydroxy-2-oxopropyl)-dGTP + H2O = lactate + dGTP + H(+). The catalysed reaction is N(2)-(1-hydroxy-2-oxopropyl)-GTP + H2O = lactate + GTP + H(+). It catalyses the reaction N(2)-(1-hydroxy-2-oxopropyl)-GDP + H2O = lactate + GDP + H(+). It carries out the reaction N(2)-(1-hydroxy-2-oxopropyl)-GMP + H2O = lactate + GMP + H(+). The enzyme catalyses N(2)-(1-hydroxy-2-oxoethyl)-dGTP + H2O = dGTP + glycolate + H(+). The catalysed reaction is N(2)-(1-hydroxy-2-oxoethyl)-GTP + H2O = glycolate + GTP + H(+). It catalyses the reaction N(2)-(1-hydroxy-2-oxoethyl)-GDP + H2O = glycolate + GDP + H(+). It carries out the reaction N(2)-(1-hydroxy-2-oxoethyl)-GMP + H2O = glycolate + GMP + H(+). The enzyme catalyses an N(2)-(1-hydroxy-2-oxopropyl)-guanosine in RNA + H2O = a guanosine in RNA + lactate + H(+). The catalysed reaction is an N(2)-(1-hydroxy-2-oxopropyl)-2'-deoxyguanosine in DNA + H2O = a 2'-deoxyguanosine in DNA + lactate + H(+). It catalyses the reaction an N(2)-(1-hydroxy-2-oxoethyl)-guanosine in RNA + H2O = a guanosine in RNA + glycolate + H(+). It carries out the reaction an N(2)-(1-hydroxy-2-oxoethyl)-2'-deoxyguanosine in DNA + H2O = a 2'-deoxyguanosine in DNA + glycolate + H(+). Its function is as follows. Protein and nucleotide deglycase that catalyzes the deglycation of the Maillard adducts formed between amino groups of proteins or nucleotides and reactive carbonyl groups of glyoxals. Thus, functions as a protein deglycase that repairs methylglyoxal- and glyoxal-glycated proteins, and releases repaired proteins and lactate or glycolate, respectively. Deglycates cysteine, arginine and lysine residues in proteins, and thus reactivates these proteins by reversing glycation by glyoxals. Acts on early glycation intermediates (hemithioacetals and aminocarbinols), preventing the formation of Schiff bases and advanced glycation endproducts (AGE). Also functions as a nucleotide deglycase able to repair glycated guanine in the free nucleotide pool (GTP, GDP, GMP, dGTP) and in DNA and RNA. Is thus involved in a major nucleotide repair system named guanine glycation repair (GG repair), dedicated to reversing methylglyoxal and glyoxal damage via nucleotide sanitization and direct nucleic acid repair. Plays an important role in protecting cells from carbonyl stress. This chain is Protein/nucleic acid deglycase HchA, found in Escherichia coli O8 (strain IAI1).